We begin with the raw amino-acid sequence, 230 residues long: Endonuclease NucS (230 aa).

This sequence belongs to the NucS endonuclease family.

Its subcellular location is the cytoplasm. Its function is as follows. Cleaves both 3' and 5' ssDNA extremities of branched DNA structures. In Corynebacterium glutamicum (strain R), this protein is Endonuclease NucS.